Here is an 877-residue protein sequence, read N- to C-terminus: Probable Ras GTPase-activating-like protein ngap (877 aa).

Residues 72-218 (TPSATYESLI…KDQKERELWF (147 aa)) enclose the C2 domain. The interval 350–456 (SDDGDISGLK…ETINLSSSIN (107 aa)) is disordered. A compositionally biased stretch (low complexity) spans 389-409 (TTATTTPSSTPSTPISPSSQS). The span at 410 to 425 (NNIKTPDSKTRSSSNA) shows a compositional bias: polar residues. 2 stretches are compositionally biased toward low complexity: residues 426–438 (STNTPQTTPKSTG) and 447–456 (ETINLSSSIN). The region spanning 591–802 (GKCLYLLKSL…ENMKSFINTL (212 aa)) is the Ras-GAP domain. Residues 820-848 (LEKELACLYRHLIKQRQDMAEEMESTESE) are a coiled coil.

Functionally, may function as a Ras GTPase-activating protein. This chain is Probable Ras GTPase-activating-like protein ngap (ngap), found in Dictyostelium discoideum (Social amoeba).